A 60-amino-acid polypeptide reads, in one-letter code: Large ribosomal subunit protein uL30 (60 aa).

It belongs to the universal ribosomal protein uL30 family. In terms of assembly, part of the 50S ribosomal subunit.

This is Large ribosomal subunit protein uL30 from Dechloromonas aromatica (strain RCB).